Here is a 181-residue protein sequence, read N- to C-terminus: MRGGKKGQQTAQKNRINEEITAQEVRLIDIDGEQAGIQSLKDAQTMADAAGVDLVEISPNAEPPVCRIMDYGKFIFEKSKELKEQKKKQKQIQIKEIKFRPGTDEGDYQVKLRNLRKFLEAGDKAKITIRFRGREMAHQEIGIELLNRIKGDLEELAVVESFPNRVEGRQMVMMMAPVAKK.

The protein belongs to the IF-3 family. In terms of assembly, monomer.

Its subcellular location is the cytoplasm. Its function is as follows. IF-3 binds to the 30S ribosomal subunit and shifts the equilibrium between 70S ribosomes and their 50S and 30S subunits in favor of the free subunits, thus enhancing the availability of 30S subunits on which protein synthesis initiation begins. The polypeptide is Translation initiation factor IF-3 (Pseudoalteromonas translucida (strain TAC 125)).